Reading from the N-terminus, the 622-residue chain is MDENEDSSIAATMGFSGFGKKARTFDLEAMFEQTRRTAVERSKKTLEAREKEEQISNKSPVMKDVPSSSRQKNTDTSSSSSGSEDSSDDELIGPPVPSNLTGDHGDELIGPPLPSGYKDSDDEDEEQHEDDDNPVKGIPDSHEITLQHGTKTVSALGLDPSGARLVTGGFDYDVRFWDFAGMDASLQAFRSLQPCECHQIKSLQYSNTGDVILVVAGNSQAKVLDRDGFPVMECVKGDQYIVDMANTKGHTAMLNGGCWHPKIKEEFMTCSNDGTVRTWDVSNEKKHKGVFKPRSMQGKRVIPTCCTYSRDGKFIAAGCQDGSIQIWDRNMSVHTKFHCRQAHTPGTDTSCVTFSYAGNILATRGGDDTLKTWDIRKFKNPLNVASGLANYFPMTDCCFSPDDKLLITGTSVKRGGGDGKLMFFDVGTFQKVYEIQVTEASVVRCLWHPKLNQIMVGTGNGLAKVYYDPNRSQRGAKLCVVKTQRKARQAETLTQDYIITPHALPMFREPRQRSTRKQLEKDRLDPVKSHKPEPPVAGPGRGGRVGTHGGTLSSFIVKNIALDKTDDSNPREAILRHAKDAEKNPYWVAPAYSKTQPNTVFAEVESDEEETDNEPEWKKRKI.

Residues 37–55 show a composition bias toward basic and acidic residues; it reads TAVERSKKTLEAREKEEQI. Residues 37-141 form a disordered region; sequence TAVERSKKTL…DNPVKGIPDS (105 aa). A compositionally biased stretch (low complexity) spans 67–84; it reads SSSRQKNTDTSSSSSGSE. Positions 120–132 are enriched in acidic residues; that stretch reads SDDEDEEQHEDDD. 7 WD repeats span residues 148–187, 195–236, 249–289, 298–337, 344–383, 389–434, and 437–476; these read HGTK…ASLQ, CECH…ECVK, GHTA…KHKG, GKRV…HTKF, TPGT…NPLN, ANYF…KVYE, and VTEA…QRGA. Residues 508–533 show a composition bias toward basic and acidic residues; it reads REPRQRSTRKQLEKDRLDPVKSHKPE. Disordered regions lie at residues 508 to 549 and 602 to 622; these read REPR…GTHG and AEVE…KRKI. The segment covering 539 to 549 has biased composition (gly residues); sequence PGRGGRVGTHG. The segment covering 604-614 has biased composition (acidic residues); that stretch reads VESDEEETDNE.

It belongs to the WD repeat GAD-1 family.

The protein is WD repeat-containing protein 70 (wdr70) of Xenopus tropicalis (Western clawed frog).